Reading from the N-terminus, the 89-residue chain is MAKKSKIAKAQKREALVAKYADKRAALKAAGDYIGLAALPKDSSPVRVHNRDWIDGRPHAYMREFGMSRLNFRQLAHKGQIPGVRKASW.

Belongs to the universal ribosomal protein uS14 family. In terms of assembly, part of the 30S ribosomal subunit. Contacts proteins S3 and S10.

Functionally, binds 16S rRNA, required for the assembly of 30S particles and may also be responsible for determining the conformation of the 16S rRNA at the A site. The chain is Small ribosomal subunit protein uS14 from Leuconostoc mesenteroides subsp. mesenteroides (strain ATCC 8293 / DSM 20343 / BCRC 11652 / CCM 1803 / JCM 6124 / NCDO 523 / NBRC 100496 / NCIMB 8023 / NCTC 12954 / NRRL B-1118 / 37Y).